We begin with the raw amino-acid sequence, 232 residues long: Ribosome maturation protein SDO1 homolog (232 aa).

This sequence belongs to the SDO1/SBDS family.

This is Ribosome maturation protein SDO1 homolog from Methanothermobacter thermautotrophicus (strain ATCC 29096 / DSM 1053 / JCM 10044 / NBRC 100330 / Delta H) (Methanobacterium thermoautotrophicum).